The chain runs to 215 residues: Large ribosomal subunit protein uL4c (215 aa).

The disordered stretch occupies residues 51–87 (QKQGTVSTKTRSEVRGGGKKPWRQKGTGRARAGSSRS). The segment covering 67 to 78 (GGKKPWRQKGTG) has biased composition (basic residues).

This sequence belongs to the universal ribosomal protein uL4 family. In terms of assembly, part of the 50S ribosomal subunit.

It localises to the plastid. It is found in the chloroplast. Probably binds the 23S rRNA. This chain is Large ribosomal subunit protein uL4c (rpl4), found in Thalassiosira pseudonana (Marine diatom).